The sequence spans 435 residues: Amidase 1 (435 aa).

Active-site charge relay system residues include lysine 38 and serine 115. Residue serine 139 is the Acyl-ester intermediate of the active site.

This sequence belongs to the amidase family.

It localises to the cytoplasm. The protein localises to the nucleus. It is found in the nucleoplasm. It carries out the reaction a monocarboxylic acid amide + H2O = a monocarboxylate + NH4(+). Its function is as follows. Amidase involved in auxin biosynthesis. Converts indole-3-acetamide (IAM) to indole-3-acetate, and phenyl-2-acetamide (PAM) to phenyl-2-acetate. Substrate preference is PAM &gt; IAM. The chain is Amidase 1 from Oryza sativa subsp. japonica (Rice).